The primary structure comprises 116 residues: Ribosome-binding factor A (116 aa).

This sequence belongs to the RbfA family. In terms of assembly, monomer. Binds 30S ribosomal subunits, but not 50S ribosomal subunits or 70S ribosomes.

Its subcellular location is the cytoplasm. Functionally, one of several proteins that assist in the late maturation steps of the functional core of the 30S ribosomal subunit. Associates with free 30S ribosomal subunits (but not with 30S subunits that are part of 70S ribosomes or polysomes). Required for efficient processing of 16S rRNA. May interact with the 5'-terminal helix region of 16S rRNA. This chain is Ribosome-binding factor A, found in Streptococcus pneumoniae serotype 4 (strain ATCC BAA-334 / TIGR4).